Consider the following 443-residue polypeptide: D-serine dehydratase (443 aa).

K118 is modified (N6-(pyridoxal phosphate)lysine).

The protein belongs to the serine/threonine dehydratase family. DsdA subfamily. In terms of assembly, monomer. Requires pyridoxal 5'-phosphate as cofactor.

It catalyses the reaction D-serine = pyruvate + NH4(+). In Photorhabdus laumondii subsp. laumondii (strain DSM 15139 / CIP 105565 / TT01) (Photorhabdus luminescens subsp. laumondii), this protein is D-serine dehydratase.